A 349-amino-acid polypeptide reads, in one-letter code: Gibberellin 3-beta-dioxygenase 3 (349 aa).

Positions 201-305 (SIQSFLQLNS…RVSAAYFAGP (105 aa)) constitute a Fe2OG dioxygenase domain. Histidine 226, aspartate 228, and histidine 286 together coordinate Fe cation. Arginine 296 is an active-site residue.

This sequence belongs to the iron/ascorbate-dependent oxidoreductase family. GA3OX subfamily. L-ascorbate is required as a cofactor. Fe cation serves as cofactor. Expressed in flower clusters and siliques.

The enzyme catalyses gibberellin A20 + 2-oxoglutarate + O2 = gibberellin A1 + succinate + CO2. Its pathway is plant hormone biosynthesis; gibberellin biosynthesis. In terms of biological role, converts the inactive gibberellin (GA) precursors GA9 and GA20 in the bioactives gibberellins GA4 and GA1. Involved in the production of bioactive GA for reproductive development. The protein is Gibberellin 3-beta-dioxygenase 3 (GA3OX3) of Arabidopsis thaliana (Mouse-ear cress).